We begin with the raw amino-acid sequence, 535 residues long: MTHSTLHQPDTATGQGLQRQLIVILDFGSQYSELIARRIRETQVYSEVISYRTTAEQLAQLAPKGIILSGGPNSVYDENAPQCDPEIWNLGIPILGVCYGMQLMVQQLGGTVERAIAGEYGKAALFIDDPTDLLTNVEQETIMWMSHGDSVTELPPGFRVLAHTDNTPIAAIAHPERKLYGVQFHPEVVHSVGGIALIRNFVYHICDCEPTWTTAAFVEEAIREVRAKVGDKRVLLALSGGVDSSTLAFLLHRAIGDQLTCMFIDQGFMRKGEPERLLKLFQEQFHIKVEYVNARDRFLAQLVGVTDPEEKRKRIGHEFIRVFEEESQRLGPFDYLAQGTLYPDVIESANTNIDPQTGERVAVKIKSHHNVGGLPENLRFKLVEPLRKLFKDEVRQVGRSLGLPEEIVQRHPFPGPGLAIRILGEVTPERLEILRDADLIVRQEINRAQMYHELWQAFAVLLPIRTVGVMGDQRTYAYPVVLRFVTSEDGMTADWARVPYDLLERISNRIVNEVPGVNRVVYDITSKPPGTIEWE.

The Glutamine amidotransferase type-1 domain maps to 21 to 211; the sequence is LIVILDFGSQ…VYHICDCEPT (191 aa). Cys-98 acts as the Nucleophile in catalysis. Residues His-185 and Glu-187 contribute to the active site. The GMPS ATP-PPase domain occupies 212–410; the sequence is WTTAAFVEEA…LGLPEEIVQR (199 aa). Residue 239 to 245 coordinates ATP; it reads SGGVDSS.

Homodimer.

The enzyme catalyses XMP + L-glutamine + ATP + H2O = GMP + L-glutamate + AMP + diphosphate + 2 H(+). It functions in the pathway purine metabolism; GMP biosynthesis; GMP from XMP (L-Gln route): step 1/1. In terms of biological role, catalyzes the synthesis of GMP from XMP. In Thermosynechococcus vestitus (strain NIES-2133 / IAM M-273 / BP-1), this protein is GMP synthase [glutamine-hydrolyzing].